The sequence spans 475 residues: Ras-GEF domain-containing family member 1A (475 aa).

The N-terminal Ras-GEF domain occupies 33-164 (QDGSLVSGSL…SISQMTQNVL (132 aa)). The Ras-GEF domain occupies 208-455 (DPLILAQQLT…FLASFENEGP (248 aa)).

In terms of biological role, guanine nucleotide exchange factor (GEF) with specificity for rap2a and other Ras family proteins (in vitro). Plays a role in cell migration. The polypeptide is Ras-GEF domain-containing family member 1A (rasgef1a) (Xenopus tropicalis (Western clawed frog)).